The sequence spans 468 residues: A-type ATP synthase subunit B (468 aa).

The protein belongs to the ATPase alpha/beta chains family. As to quaternary structure, has multiple subunits with at least A(3), B(3), C, D, E, F, H, I and proteolipid K(x).

It is found in the cell membrane. Its function is as follows. Component of the A-type ATP synthase that produces ATP from ADP in the presence of a proton gradient across the membrane. The B chain is a regulatory subunit. This Haloferax volcanii (strain ATCC 29605 / DSM 3757 / JCM 8879 / NBRC 14742 / NCIMB 2012 / VKM B-1768 / DS2) (Halobacterium volcanii) protein is A-type ATP synthase subunit B.